The primary structure comprises 336 residues: Heme A synthase (336 aa).

The next 8 helical transmembrane spans lie at 5–25 (LTRWLLTCCIMVVAMIIVGGI), 92–112 (GRATGLIYILPLIYFYFKGII), 117–137 (ILSYIIVLLLFCVQGFMGWYM), 153–173 (LAFHLIIAVIIYHLLFYKLVK), 191–211 (LIFSVAAIAMIYVQIFLGALV), 253–273 (FIHRLGAYSLSIIVIALIISL), 284–304 (VAFYLSIALLIQLSTGVITLL), and 307–327 (VPIIAASMHQFFAIVLLSVVI). His-255 provides a ligand contact to heme. A heme-binding site is contributed by His-315.

Belongs to the COX15/CtaA family. Type 2 subfamily. Interacts with CtaB. Heme b is required as a cofactor.

It is found in the cell membrane. The enzyme catalyses Fe(II)-heme o + 2 A + H2O = Fe(II)-heme a + 2 AH2. Its pathway is porphyrin-containing compound metabolism; heme A biosynthesis; heme A from heme O: step 1/1. In terms of biological role, catalyzes the conversion of heme O to heme A by two successive hydroxylations of the methyl group at C8. The first hydroxylation forms heme I, the second hydroxylation results in an unstable dihydroxymethyl group, which spontaneously dehydrates, resulting in the formyl group of heme A. This is Heme A synthase from Rickettsia bellii (strain RML369-C).